Consider the following 93-residue polypeptide: uncharacterized protein (93 aa).

To E.coli YdbD C-terminal region.

This is an uncharacterized protein from Escherichia coli (strain K12).